The chain runs to 295 residues: Movement protein BC1 (295 aa).

The protein belongs to the begomovirus movement protein BC1 family. In terms of assembly, binds to dimeric supercoiled plasmid DNA. In terms of processing, phosphorylated.

The protein localises to the host cell membrane. It is found in the host microsome membrane. Its subcellular location is the host endoplasmic reticulum membrane. Its function is as follows. Transports viral genome to neighboring plant cells directly through plasmosdesmata, without any budding. The movement protein allows efficient cell to cell propagation, by bypassing the host cell wall barrier. Begomovirus genome is shuttled out of nucleus by Nuclear shuttle protein (NSP) and the movement protein transports the DNA-NSP complex to cell plasmodesmata and facilitates further movement across the cell wall. This chain is Movement protein BC1, found in Brassica oleracea (Wild cabbage).